Consider the following 240-residue polypeptide: Glutathione S-transferase theta-1 (240 aa).

The GST N-terminal domain maps to 2 to 82 (VLELYLDLLS…YLAHKYKVPD (81 aa)). Residues histidine 40, 53-54 (RV), and 66-67 (ES) each bind glutathione. The GST C-terminal domain maps to 88–222 (DLQARARVDE…VILKVKDCPP (135 aa)).

The protein belongs to the GST superfamily. Theta family. Homodimer. In terms of tissue distribution, in liver, highest expression found in central vein limiting plate hepatocytes. Also expressed in interlobular bile duct epithelial cells. In lung, expressed in club cells and ciliated cells of the bronchiolar epithelium and in type II alveolar cells of the lung parenchyma.

The protein localises to the cytoplasm. It localises to the nucleus. The enzyme catalyses RX + glutathione = an S-substituted glutathione + a halide anion + H(+). Its function is as follows. Conjugation of reduced glutathione to a wide number of exogenous and endogenous hydrophobic electrophiles. Also binds steroids, bilirubin, carcinogens and numerous organic anions. Has dichloromethane dehalogenase activity. The polypeptide is Glutathione S-transferase theta-1 (Gstt1) (Mus musculus (Mouse)).